The following is a 453-amino-acid chain: Tubulin alpha-13 chain (453 aa).

Gln-11 provides a ligand contact to GTP. Lys-40 carries the post-translational modification N6-acetyllysine. GTP contacts are provided by Glu-71, Ser-140, Gly-144, Thr-145, Thr-179, Asn-206, and Asn-228. Residue Glu-71 participates in Mg(2+) binding. The active site involves Glu-254. The disordered stretch occupies residues 429–453; it reads EKDYEEVGTESQEGDGEEGEDGGDQ. Acidic residues predominate over residues 431-453; sequence DYEEVGTESQEGDGEEGEDGGDQ.

It belongs to the tubulin family. In terms of assembly, dimer of alpha and beta chains. A typical microtubule is a hollow water-filled tube with an outer diameter of 25 nm and an inner diameter of 15 nM. Alpha-beta heterodimers associate head-to-tail to form protofilaments running lengthwise along the microtubule wall with the beta-tubulin subunit facing the microtubule plus end conferring a structural polarity. Microtubules usually have 13 protofilaments but different protofilament numbers can be found in some organisms and specialized cells. Requires Mg(2+) as cofactor. Acetylation of alpha chains at Lys-40 stabilizes microtubules and affects affinity and processivity of microtubule motors. This modification has a role in multiple cellular functions, ranging from cell motility, cell cycle progression or cell differentiation to intracellular trafficking and signaling.

It localises to the cytoplasm. Its subcellular location is the cytoskeleton. The enzyme catalyses GTP + H2O = GDP + phosphate + H(+). Its function is as follows. Tubulin is the major constituent of microtubules, a cylinder consisting of laterally associated linear protofilaments composed of alpha- and beta-tubulin heterodimers. Microtubules grow by the addition of GTP-tubulin dimers to the microtubule end, where a stabilizing cap forms. Below the cap, tubulin dimers are in GDP-bound state, owing to GTPase activity of alpha-tubulin. This Naegleria pringsheimi (Amoeba) protein is Tubulin alpha-13 chain (TUBA13).